Here is a 395-residue protein sequence, read N- to C-terminus: Sensor protein DltS (395 aa).

Transmembrane regions (helical) follow at residues 9-29 and 136-156; these read FVFL…AVSN and FLIL…SLYL. Residues 177–387 enclose the Histidine kinase domain; that stretch reads DASHELKTPI…RLEVQLPIDG (211 aa). Phosphohistidine; by autocatalysis is present on H180.

The protein resides in the cell membrane. It catalyses the reaction ATP + protein L-histidine = ADP + protein N-phospho-L-histidine.. Its function is as follows. Member of the two-component regulatory system DltS/DltR. Regulates the expression of the dlt operon. Probably phosphorylates DltR. The protein is Sensor protein DltS (dltS) of Streptococcus agalactiae serotype V (strain ATCC BAA-611 / 2603 V/R).